An 83-amino-acid chain; its full sequence is Small ribosomal subunit protein bS16 (83 aa).

It belongs to the bacterial ribosomal protein bS16 family.

The polypeptide is Small ribosomal subunit protein bS16 (Pseudomonas fluorescens (strain SBW25)).